Consider the following 200-residue polypeptide: Transcription elongation factor A protein-like 6 (200 aa).

Residues 1–200 (MEKPYNKNEG…QRGLHDIPYL (200 aa)) are disordered. Residues 20 to 36 (DEVEPDDEGKSDEEEKP) show a composition bias toward acidic residues. A Phosphoserine modification is found at serine 30. Basic and acidic residues-rich tracts occupy residues 37–52 (DAEG…KAEG), 60–80 (LEDK…KPQG), and 115–154 (DRGT…EELR). The residue at position 65 (serine 65) is a Phosphoserine.

This sequence belongs to the TFS-II family. TFA subfamily.

Its subcellular location is the nucleus. Its function is as follows. May be involved in transcriptional regulation. This is Transcription elongation factor A protein-like 6 (TCEAL6) from Homo sapiens (Human).